Reading from the N-terminus, the 209-residue chain is Chalcone isomerase-like protein 2 (209 aa).

Belongs to the chalcone isomerase family. As to quaternary structure, component an active demethylxanthohumol (DMX) biosynthetic metabolon in glandular trichomes (lupulin glands) that encompasses a chalcone synthase (CHS) and a membrane-bound prenyltransferase. Interacts with CHS_H1 and PT1L. Mostly expressed in glandular trichomes (lupulin glands), and, to a lower extent, in cones, cones bracts, leaves, stems and roots.

Its subcellular location is the cytoplasm. The catalysed reaction is a chalcone = a flavanone.. It participates in secondary metabolite biosynthesis; flavonoid biosynthesis. Its function is as follows. Involved in the biosynthesis of prenylated phenolics natural products which contribute to the bitter taste of beer and display broad biological activities. Involved in anthocyanin biosynthesis. Polyketide binding proteins (PBP) which promotes the catalytic activities of CHS_H1 and PT1L and triggers demethylxanthohumol (DMX) production. The protein is Chalcone isomerase-like protein 2 of Humulus lupulus (European hop).